A 236-amino-acid polypeptide reads, in one-letter code: MTIRTLTPIEARVLGTLMEKARTVPDSYPLSLNALVSGCNQKTSRDPLMEVNDDEARAAIDSLKAQSLVFEGSSSRVPRFEHNFQRAAGVNEPQAMVMGLLMLRGPQTAAELRTNGERWYRFADSAAVEAVLLELQQRGEDGGQATVQKLPRAAGAREQRWVHLLCGEPDIQALMASAPTTAEAEGLLARVTALENTLARLKADNAQLRSHVLNISEQLGIALPETLDDAHDHSPN.

This sequence belongs to the UPF0502 family.

This chain is UPF0502 protein Bpro_3844, found in Polaromonas sp. (strain JS666 / ATCC BAA-500).